The sequence spans 245 residues: NAD-dependent protein deacetylase (245 aa).

Positions M1–K245 constitute a Deacetylase sirtuin-type domain. 8 residues coordinate NAD(+): A26, T30, F37, R38, Q105, I107, D108, and H123. F37 provides a ligand contact to nicotinamide. Positions 107 and 108 each coordinate nicotinamide. H123 (proton acceptor) is an active-site residue. C131, C134, C151, and C154 together coordinate Zn(2+). Residues T190, S191, N216, and I234 each coordinate NAD(+).

It belongs to the sirtuin family. Class U subfamily. The cofactor is Zn(2+).

The protein localises to the cytoplasm. The catalysed reaction is N(6)-acetyl-L-lysyl-[protein] + NAD(+) + H2O = 2''-O-acetyl-ADP-D-ribose + nicotinamide + L-lysyl-[protein]. NAD-dependent protein deacetylase which modulates the activities of several enzymes which are inactive in their acetylated form. In Bacillus thuringiensis subsp. konkukian (strain 97-27), this protein is NAD-dependent protein deacetylase.